The chain runs to 727 residues: Elongation factor 2 (727 aa).

Residues Glu19–Leu260 enclose the tr-type G domain. GTP contacts are provided by residues Ala28–Thr35, Asp94–His98, and Asn148–Asp151. His603 is modified (diphthamide).

The protein belongs to the TRAFAC class translation factor GTPase superfamily. Classic translation factor GTPase family. EF-G/EF-2 subfamily.

It is found in the cytoplasm. Functionally, catalyzes the GTP-dependent ribosomal translocation step during translation elongation. During this step, the ribosome changes from the pre-translocational (PRE) to the post-translocational (POST) state as the newly formed A-site-bound peptidyl-tRNA and P-site-bound deacylated tRNA move to the P and E sites, respectively. Catalyzes the coordinated movement of the two tRNA molecules, the mRNA and conformational changes in the ribosome. The chain is Elongation factor 2 from Methanococcus maripaludis (strain DSM 14266 / JCM 13030 / NBRC 101832 / S2 / LL).